Here is a 512-residue protein sequence, read N- to C-terminus: ATP synthase subunit alpha (512 aa).

Position 170-177 (170-177 (GDRQTGKT)) interacts with ATP.

This sequence belongs to the ATPase alpha/beta chains family. As to quaternary structure, F-type ATPases have 2 components, CF(1) - the catalytic core - and CF(0) - the membrane proton channel. CF(1) has five subunits: alpha(3), beta(3), gamma(1), delta(1), epsilon(1). CF(0) has three main subunits: a(1), b(2) and c(9-12). The alpha and beta chains form an alternating ring which encloses part of the gamma chain. CF(1) is attached to CF(0) by a central stalk formed by the gamma and epsilon chains, while a peripheral stalk is formed by the delta and b chains.

It is found in the cell inner membrane. The enzyme catalyses ATP + H2O + 4 H(+)(in) = ADP + phosphate + 5 H(+)(out). Its function is as follows. Produces ATP from ADP in the presence of a proton gradient across the membrane. The alpha chain is a regulatory subunit. In Solibacter usitatus (strain Ellin6076), this protein is ATP synthase subunit alpha.